The sequence spans 593 residues: Progranulin (593 aa).

The first 17 residues, 1–17 (MWTLVSWVALTAGLVAG), serve as a signal peptide directing secretion. N-linked (GlcNAc...) asparagine glycosylation is present at N118. Cystine bridges form between C126/C139 and C133/C149. N-linked (GlcNAc...) asparagine glycosylation is found at N236 and N265. 10 cysteine pairs are disulfide-bonded: C284-C296, C290-C306, C297-C314, C307-C321, C315-C328, C322-C335, C366-C378, C372-C388, C397-C410, and C404-C416. N-linked (GlcNAc...) asparagine glycosylation is present at N368. N530 is a glycosylation site (N-linked (GlcNAc...) asparagine).

The protein belongs to the granulin family. As to quaternary structure, progranulin is secreted as a homodimer. Interacts with SLPI; interaction protects progranulin from proteolysis. Interacts (via region corresponding to granulin-7 peptide) with CTSD; stabilizes CTSD and increases its proteolytic activity. Interacts (via region corresponding to granulin-7 peptide) with SORT1; this interaction mediates endocytosis and lysosome delivery of progranulin; interaction occurs at the neuronal cell surface in a stressed nervous system. Interacts with PSAP; facilitates lysosomal delivery of progranulin from the extracellular space and the biosynthetic pathway. Forms a complex with PSAP and M6PR; PSAP bridges the binding between progranulin and M6PR. Forms a complex with PSAP and SORT1; progranulin bridges the interaction between PSAP and SORT1; facilitates lysosomal targeting of PSAP via SORT1; interaction enhances PSAP uptake in primary cortical neurons. Interacts (via regions corresponding to granulin-2 and granulin-7 peptides) with GBA1; this interaction prevents aggregation of GBA1-SCARB2 complex via interaction with HSPA1A upon stress. Interacts (via region corresponding to granulin-7 peptide) with HSPA1A; mediates recruitment of HSPA1A to GBA1 and prevents GBA1 aggregation in response to stress. Post-translationally, cleaved by ELANE; proteolysis is blocked by SLPI and is concentration- and time-dependent and induces CXCL8/IL-8 production; granulin-3 and granulin-4 are resistant to ELANE. Cleaved by CTSL in lysosome thus regulating the maturation and turnover of progranulin within the lysosome. As to expression, in myelogenous leukemic cell lines of promonocytic, promyelocytic, and proerythroid lineage, in fibroblasts, and very strongly in epithelial cell lines. Present in inflammatory cells and bone marrow. Highest levels in kidney.

The protein localises to the secreted. Its subcellular location is the lysosome. Secreted protein that acts as a key regulator of lysosomal function and as a growth factor involved in inflammation, wound healing and cell proliferation. Regulates protein trafficking to lysosomes, and also the activity of lysosomal enzymes. Also facilitates the acidification of lysosomes, causing degradation of mature CTSD by CTSB. In addition, functions as a wound-related growth factor that acts directly on dermal fibroblasts and endothelial cells to promote division, migration and the formation of capillary-like tubule structures. Also promotes epithelial cell proliferation by blocking TNF-mediated neutrophil activation preventing release of oxidants and proteases. Moreover, modulates inflammation in neurons by preserving neurons survival, axonal outgrowth and neuronal integrity. Its function is as follows. Promotes proliferation of the epithelial cell line A431 in culture. In terms of biological role, inhibits epithelial cell proliferation and induces epithelial cells to secrete IL-8. Functionally, stabilizes CTSD through interaction with CTSD leading to maintain its aspartic-type peptidase activity. In Homo sapiens (Human), this protein is Progranulin.